A 237-amino-acid polypeptide reads, in one-letter code: Ribonuclease PH (237 aa).

Residues Arg86 and 124–126 (GTR) contribute to the phosphate site.

This sequence belongs to the RNase PH family. As to quaternary structure, homohexameric ring arranged as a trimer of dimers.

It catalyses the reaction tRNA(n+1) + phosphate = tRNA(n) + a ribonucleoside 5'-diphosphate. Its function is as follows. Phosphorolytic 3'-5' exoribonuclease that plays an important role in tRNA 3'-end maturation. Removes nucleotide residues following the 3'-CCA terminus of tRNAs; can also add nucleotides to the ends of RNA molecules by using nucleoside diphosphates as substrates, but this may not be physiologically important. Probably plays a role in initiation of 16S rRNA degradation (leading to ribosome degradation) during starvation. In Shewanella sp. (strain W3-18-1), this protein is Ribonuclease PH.